The sequence spans 216 residues: Uracil-DNA glycosylase (216 aa).

Asp60 serves as the catalytic Proton acceptor.

Belongs to the uracil-DNA glycosylase (UDG) superfamily. UNG family.

Its subcellular location is the cytoplasm. The enzyme catalyses Hydrolyzes single-stranded DNA or mismatched double-stranded DNA and polynucleotides, releasing free uracil.. Its function is as follows. Excises uracil residues from the DNA which can arise as a result of misincorporation of dUMP residues by DNA polymerase or due to deamination of cytosine. This Psychromonas ingrahamii (strain DSM 17664 / CCUG 51855 / 37) protein is Uracil-DNA glycosylase.